Reading from the N-terminus, the 155-residue chain is Small ribosomal subunit protein uS7cz/uS7cy (155 aa).

The protein belongs to the universal ribosomal protein uS7 family. In terms of assembly, part of the 30S ribosomal subunit.

Its subcellular location is the plastid. The protein localises to the chloroplast. In terms of biological role, one of the primary rRNA binding proteins, it binds directly to 16S rRNA where it nucleates assembly of the head domain of the 30S subunit. The chain is Small ribosomal subunit protein uS7cz/uS7cy (rps7-A) from Chloranthus spicatus (Chulantree).